The primary structure comprises 28 residues: Heat shock protein 81 (28 aa).

ATP-binding residues include asparagine 5 and aspartate 21.

It belongs to the heat shock protein 90 family. As to quaternary structure, homodimer.

It is found in the cytoplasm. In terms of biological role, putative molecular chaperone that may promote the maturation, structural maintenance and proper regulation of specific target proteins. The protein is Heat shock protein 81 of Pseudotsuga menziesii (Douglas-fir).